The sequence spans 118 residues: Large ribosomal subunit protein bL20 (118 aa).

Belongs to the bacterial ribosomal protein bL20 family.

Functionally, binds directly to 23S ribosomal RNA and is necessary for the in vitro assembly process of the 50S ribosomal subunit. It is not involved in the protein synthesizing functions of that subunit. The protein is Large ribosomal subunit protein bL20 of Francisella tularensis subsp. holarctica (strain FTNF002-00 / FTA).